A 1228-amino-acid polypeptide reads, in one-letter code: Reverse gyrase (1228 aa).

An RG N-terminal-type zinc finger spans residues 1–41 (MEVPLVAYLHSCPNCGGPITSDRLASGLPCRECLPDGAKAG). Cys-12, Cys-15, Cys-30, and Cys-33 together coordinate Zn(2+). ATP-binding positions include Gln-88 and 105–112 (APTGSGKT). The region spanning 92–255 (ARRFVRGKSF…NLTKQLRKAE (164 aa)) is the Helicase ATP-binding domain. The DEAD box signature appears at 211–214 (DDVD). Residues 631-1228 (DLMRTILMVV…RKEVLPHLAS (598 aa)) form a topoisomerase I region. Residues 635–809 (TILMVVESPT…DIRRVEFHEV (175 aa)) form the Toprim domain. Glu-641 and Asp-778 together coordinate Mg(2+). The region spanning 825–1223 (NFSLVKAQIV…LYDEFRKEVL (399 aa)) is the Topo IA-type catalytic domain. Tyr-967 serves as the catalytic O-(5'-phospho-DNA)-tyrosine intermediate.

The protein in the N-terminal section; belongs to the DEAD box helicase family. DDVD subfamily. In the C-terminal section; belongs to the type IA topoisomerase family. In terms of assembly, monomer. The cofactor is Zn(2+). Mg(2+) is required as a cofactor.

The protein resides in the cytoplasm. It carries out the reaction ATP + H2O = ADP + phosphate + H(+). Modifies the topological state of DNA by introducing positive supercoils in an ATP-dependent process, increasing the linking number in steps of +1. Binds to single-stranded DNA, transiently cleaves and then rejoins the ends, introducing a positive supercoil in the process. The scissile phosphodiester is attacked by the catalytic tyrosine of the enzyme, resulting in the formation of a DNA-(5'-phosphotyrosyl)-enzyme intermediate. Probably involved in rewinding DNA strands in regions of the chromosome that have opened up to allow replication, transcription, DNA repair and/or for DNA protection. This Pyrobaculum aerophilum (strain ATCC 51768 / DSM 7523 / JCM 9630 / CIP 104966 / NBRC 100827 / IM2) protein is Reverse gyrase.